The primary structure comprises 815 residues: Serotype-specific mannosyltransferase WbdA (815 aa).

The interval 1–374 (MSRAIIENAG…WANTAHLAID (374 aa)) is alpha-(1-&gt;2)-mannosyltransferase. The interval 431–804 (KLLVDISVLA…WKQSAELLLK (374 aa)) is alpha-(1-&gt;3)-mannosyltransferase.

It belongs to the glycosyltransferase group 1 family. Glycosyltransferase 4 subfamily.

The protein localises to the cell inner membrane. Its pathway is bacterial outer membrane biogenesis; LPS O-antigen biosynthesis. Mannosyltransferase involved in the biosynthesis of the repeat unit of the lipopolysaccharide (LPS) O-antigen region. The protein is Serotype-specific mannosyltransferase WbdA of Escherichia coli.